The chain runs to 145 residues: Transcriptional anti-antiactivator ExsC (145 aa).

As to quaternary structure, homodimer. Interacts with ExsE. Interacts directly with ExsD to form a heterotetrameric complex.

The protein localises to the cytoplasm. Its activity is regulated as follows. In the absence of inducing signals, ExsE interacts with and inhibits ExsC activity. Its function is as follows. Part of the regulatory cascade that plays a role in the transcriptional regulation of the type III secretion system (T3SS). Interacts with antiactivator ExsD to inhibit its activity leading to ExsA-mediated transcription. In Pseudomonas aeruginosa (strain ATCC 15692 / DSM 22644 / CIP 104116 / JCM 14847 / LMG 12228 / 1C / PRS 101 / PAO1), this protein is Transcriptional anti-antiactivator ExsC (exsC).